Here is a 174-residue protein sequence, read N- to C-terminus: Chorismate pyruvate-lyase (174 aa).

Substrate is bound by residues Met-36, Arg-78, Leu-116, and Glu-157.

The protein belongs to the UbiC family. As to quaternary structure, monomer.

Its subcellular location is the cytoplasm. It catalyses the reaction chorismate = 4-hydroxybenzoate + pyruvate. Its pathway is cofactor biosynthesis; ubiquinone biosynthesis. Functionally, removes the pyruvyl group from chorismate, with concomitant aromatization of the ring, to provide 4-hydroxybenzoate (4HB) for the ubiquinone pathway. The chain is Chorismate pyruvate-lyase from Serratia proteamaculans (strain 568).